The primary structure comprises 566 residues: MSLNSEEDEAELVQLQPRYNGEDTSATTNRELNGWYAYPIAAEVFAVVAVGAFLPVILEQLARENGYFFSDSTKSCVDHGGSRRMRAEDGLKGSEQCMIKILNSTISTSSFAMYTFSAAVIVQAVTLVCFSSFADHGPYRKKMLMAFAYTGSVASALFIFISPTVYFLAPILVIVGVTSLGCSFVLLNAFLPLLVANHANNTGAKFATADSSSDFELEALNPNTQCGQSHARSAHMSSRGVGYGYMAAVFVQVISILILWLFSKTAIQKRHPSLPIRVILLLVGMWWAALTTPTLLWLRPRPGPPLPSQEAKTLSAPTSRFRTFLFYTRFSLRSFWRTLLRAISLRQTLMFLISWFLLSDAVATISGTAVLFARTELHMGTIAIALLSITSIGSGIIGAFAWPRVQKRFSLQPKTILLCCVAGMEMIPLYGLLGFIPLFKKLGFIGLQQPWEIYPVAVLHGIVMGGVSSYARSVYAPLIPEGSEAAFFALYAVTDKGSSAFGPALVGWLVDHAGSIRPAFIFLAVLVVLPAPLLWMLDVEKGREDAKAMADGEGRGRGTYERVREE.

A helical membrane pass occupies residues 38–58 (YPIAAEVFAVVAVGAFLPVIL). An N-linked (GlcNAc...) asparagine glycan is attached at Asn103. The next 3 membrane-spanning stretches (helical) occupy residues 110–130 (SFAM…LVCF), 146–168 (AFAY…VYFL), and 179–199 (SLGC…ANHA). Asn200 carries an N-linked (GlcNAc...) asparagine glycan. The next 8 membrane-spanning stretches (helical) occupy residues 242–262 (GYGY…LWLF), 278–298 (VILL…LLWL), 351–371 (FLIS…TAVL), 382–402 (IAIA…AFAW), 416–436 (ILLC…LGFI), 451–471 (WEIY…SSYA), 488–510 (FALY…GWLV), and 519–539 (AFIF…MLDV). Residues 547-566 (KAMADGEGRGRGTYERVREE) form a disordered region.

This sequence belongs to the ATG22 family.

It localises to the vacuole membrane. In terms of biological role, vacuolar effluxer which mediate the efflux of amino acids resulting from autophagic degradation. The release of autophagic amino acids allows the maintenance of protein synthesis and viability during nitrogen starvation. The protein is Autophagy-related protein 22-1 (ATG22-1) of Phaeosphaeria nodorum (strain SN15 / ATCC MYA-4574 / FGSC 10173) (Glume blotch fungus).